We begin with the raw amino-acid sequence, 284 residues long: 2-dehydro-3-deoxyphosphooctonate aldolase (284 aa).

It belongs to the KdsA family.

The protein resides in the cytoplasm. It catalyses the reaction D-arabinose 5-phosphate + phosphoenolpyruvate + H2O = 3-deoxy-alpha-D-manno-2-octulosonate-8-phosphate + phosphate. It functions in the pathway carbohydrate biosynthesis; 3-deoxy-D-manno-octulosonate biosynthesis; 3-deoxy-D-manno-octulosonate from D-ribulose 5-phosphate: step 2/3. Its pathway is bacterial outer membrane biogenesis; lipopolysaccharide biosynthesis. In Actinobacillus pleuropneumoniae serotype 7 (strain AP76), this protein is 2-dehydro-3-deoxyphosphooctonate aldolase.